The following is a 179-amino-acid chain: ATP synthase subunit delta (179 aa).

It belongs to the ATPase delta chain family. In terms of assembly, F-type ATPases have 2 components, F(1) - the catalytic core - and F(0) - the membrane proton channel. F(1) has five subunits: alpha(3), beta(3), gamma(1), delta(1), epsilon(1). F(0) has three main subunits: a(1), b(2) and c(10-14). The alpha and beta chains form an alternating ring which encloses part of the gamma chain. F(1) is attached to F(0) by a central stalk formed by the gamma and epsilon chains, while a peripheral stalk is formed by the delta and b chains.

The protein localises to the cell membrane. Functionally, f(1)F(0) ATP synthase produces ATP from ADP in the presence of a proton or sodium gradient. F-type ATPases consist of two structural domains, F(1) containing the extramembraneous catalytic core and F(0) containing the membrane proton channel, linked together by a central stalk and a peripheral stalk. During catalysis, ATP synthesis in the catalytic domain of F(1) is coupled via a rotary mechanism of the central stalk subunits to proton translocation. This protein is part of the stalk that links CF(0) to CF(1). It either transmits conformational changes from CF(0) to CF(1) or is implicated in proton conduction. The chain is ATP synthase subunit delta from Clostridium perfringens (strain SM101 / Type A).